The primary structure comprises 314 residues: MSRPRRRGRDINGVLLLDKPQGMSSNDALQKVKRIYNANRAGHTGALDPLATGMLPICLGEATKFSQYLLDSDKRYRVIARLGQRTDTSDADGQIVEERPVTFSAEQLAAALDTFRGDIEQIPSMYSALKYQGKKLYEYARQGIEVPREARPITVYELLFIRHEGNELELEIHCSKGTYIRTIIDDLGEKLGCGAHVIYLRRLAVSKYPVERMVTLEHLRELVEQAEQQDIPAAELLDPLLMPMDSPASDYPVVNLPLTSSVYFKNGNPVRTSGAPLEGLVRVTEGENGKFIGMGEIDDEGRVAPRRLVVEYPA.

Residue H43 coordinates substrate. The active-site Nucleophile is D48. 3 residues coordinate substrate: Y76, Y179, and L200.

The protein belongs to the pseudouridine synthase TruB family. Type 1 subfamily.

It catalyses the reaction uridine(55) in tRNA = pseudouridine(55) in tRNA. In terms of biological role, responsible for synthesis of pseudouridine from uracil-55 in the psi GC loop of transfer RNAs. The chain is tRNA pseudouridine synthase B from Escherichia coli O157:H7.